Reading from the N-terminus, the 105-residue chain is Iron-sulfur cluster assembly protein CyaY (105 aa).

The protein belongs to the frataxin family.

Involved in iron-sulfur (Fe-S) cluster assembly. May act as a regulator of Fe-S biogenesis. This chain is Iron-sulfur cluster assembly protein CyaY, found in Psychromonas ingrahamii (strain DSM 17664 / CCUG 51855 / 37).